Reading from the N-terminus, the 351-residue chain is N-formyl peptide receptor 2 (351 aa).

The Extracellular portion of the chain corresponds to 1 to 27 (METNFSTPLNEYEEVSYESAGYTVLRI). The N-linked (GlcNAc...) asparagine glycan is linked to N4. Residues 28–50 (LPLVVLGVTFVLGVLGNGLVIWV) form a helical membrane-spanning segment. Over 51-61 (AGFRMTRTVTT) the chain is Cytoplasmic. A helical membrane pass occupies residues 62–83 (ICYLNLALADFSFTATLPFLIV). Over 84–100 (SMAMGEKWPFGWFLCKL) the chain is Extracellular. Cysteines 98 and 176 form a disulfide. Residues 101–121 (IHIVVDINLFGSVFLIGFIAL) traverse the membrane as a helical segment. Residues 122 to 140 (DRCICVLHPVWAQNHRTVS) lie on the Cytoplasmic side of the membrane. The chain crosses the membrane as a helical span at residues 141–162 (LAMKVIVGPWILALVLTLPVFL). At 163-205 (FLTTVTIPNGDTYCTFNFASWGGTPEERLKVAITMLTARGIIR) the chain is on the extracellular side. The chain crosses the membrane as a helical span at residues 206–226 (FVIGFSLPMSIVAICYGLIAA). Over 227 to 242 (KIHKKGMIKSSRPLRV) the chain is Cytoplasmic. The helical transmembrane segment at 243–266 (LTAVVASFFICWFPFQLVALLGTV) threads the bilayer. Topologically, residues 267–286 (WLKEMLFYGKYKIIDILVNP) are extracellular. The chain crosses the membrane as a helical span at residues 287 to 306 (TSSLAFFNSCLNPMLYVFVG). Residues 307 to 351 (QDFRERLIHSLPTSLERALSEDSAPTNDTAANSASPPAETELQAM) are Cytoplasmic-facing. Positions 325-351 (LSEDSAPTNDTAANSASPPAETELQAM) are disordered. Polar residues predominate over residues 329-341 (SAPTNDTAANSAS).

This sequence belongs to the G-protein coupled receptor 1 family. Interacts with Amyloid-beta protein 42, product of APP; the interaction takes place at the cell surface and the complex is then rapidly internalized. As to quaternary structure, (Microbial infection) Interacts with Staphylococcus aureus protein SSL13; this interaction leads to the activation of neutrophils. As to expression, detected in lung, bone marrow, neutrophils, spleen and testis.

The protein localises to the cell membrane. In terms of biological role, low affinity receptor for N-formyl-methionyl peptides, which are powerful neutrophil chemotactic factors. Binding of FMLP to the receptor causes activation of neutrophils. This response is mediated via a G-protein that activates a phosphatidylinositol-calcium second messenger system. The activation of LXA4R could result in an anti-inflammatory outcome counteracting the actions of pro-inflammatory signals such as LTB4 (leukotriene B4). Receptor for the chemokine-like protein FAM19A5, mediating FAM19A5-stimulated macrophage chemotaxis and the inhibitory effect on TNFSF11/RANKL-induced osteoclast differentiation. Acts as a receptor for humanin. The protein is N-formyl peptide receptor 2 (FPR2) of Homo sapiens (Human).